Consider the following 176-residue polypeptide: ATP-dependent protease subunit HslV (176 aa).

T5 is an active-site residue. Na(+)-binding residues include A161, C164, and T167.

This sequence belongs to the peptidase T1B family. HslV subfamily. In terms of assembly, a double ring-shaped homohexamer of HslV is capped on each side by a ring-shaped HslU homohexamer. The assembly of the HslU/HslV complex is dependent on binding of ATP.

Its subcellular location is the cytoplasm. It carries out the reaction ATP-dependent cleavage of peptide bonds with broad specificity.. Allosterically activated by HslU binding. Its function is as follows. Protease subunit of a proteasome-like degradation complex believed to be a general protein degrading machinery. The polypeptide is ATP-dependent protease subunit HslV (Caldicellulosiruptor saccharolyticus (strain ATCC 43494 / DSM 8903 / Tp8T 6331)).